The chain runs to 1057 residues: mRNA export factor elf1 (1057 aa).

ABC transporter domains lie at 440–659 (IEEE…VKPE) and 692–1019 (LKMT…KKKL). ATP is bound by residues 477 to 484 (GHNGCGKS) and 726 to 733 (GPNGAGKS). A Phosphoserine modification is found at serine 733. Residues 820 to 869 (RRVEALIGRQKLKKSFQYEIKWFGKPHKYNTWVSREILLENGFQKFVQAF) enclose the Chromo domain. Over residues 1020-1036 (TRNEIKAKERRAREREL) the composition is skewed to basic and acidic residues. A disordered region spans residues 1020-1057 (TRNEIKAKERRARERELAWLQSPKGTEKPKSFFSDDEE). Serine 1041 and serine 1053 each carry phosphoserine.

This sequence belongs to the ABC transporter superfamily. ABCF family. EF3 subfamily.

It localises to the cytoplasm. The protein resides in the nucleus. Functionally, has a direct role in the mRNA export process. Appears to act within the rae1 mediated mRNA export pathway. The polypeptide is mRNA export factor elf1 (elf1) (Schizosaccharomyces pombe (strain 972 / ATCC 24843) (Fission yeast)).